Here is a 66-residue protein sequence, read N- to C-terminus: KEGYLVNSYTGCKFECFKLGDNDYCKRECKQQYGKSSGGYCYAFGCWCTHLYEQAVVWPLPNKTCN.

In terms of domain architecture, LCN-type CS-alpha/beta spans 1–66 (KEGYLVNSYT…VWPLPNKTCN (66 aa)). 4 disulfides stabilise this stretch: Cys-12–Cys-65, Cys-16–Cys-41, Cys-25–Cys-46, and Cys-29–Cys-48. At Asn-66 the chain carries Asparagine amide.

The protein belongs to the long (4 C-C) scorpion toxin superfamily. Sodium channel inhibitor family. Beta subfamily. Expressed by the venom gland.

It localises to the secreted. In terms of biological role, beta toxins bind voltage-independently at site-4 of sodium channels (Nav) and shift the voltage of activation toward more negative potentials thereby affecting sodium channel activation and promoting spontaneous and repetitive firing. This chain is Beta-toxin Css6, found in Centruroides suffusus (Durango bark scorpion).